Here is a 354-residue protein sequence, read N- to C-terminus: Uroporphyrinogen decarboxylase (354 aa).

Substrate-binding positions include 27–31, D77, Y154, T209, and H327; that span reads RQAGR.

It belongs to the uroporphyrinogen decarboxylase family. As to quaternary structure, homodimer.

It localises to the cytoplasm. The catalysed reaction is uroporphyrinogen III + 4 H(+) = coproporphyrinogen III + 4 CO2. Its pathway is porphyrin-containing compound metabolism; protoporphyrin-IX biosynthesis; coproporphyrinogen-III from 5-aminolevulinate: step 4/4. In terms of biological role, catalyzes the decarboxylation of four acetate groups of uroporphyrinogen-III to yield coproporphyrinogen-III. In Salmonella heidelberg (strain SL476), this protein is Uroporphyrinogen decarboxylase.